The primary structure comprises 449 residues: Tubulin alpha-2B chain (449 aa).

GTP is bound at residue Q11. The residue at position 40 (K40) is an N6-acetyllysine. Residues E71, S140, G144, T145, T179, N206, and N228 each coordinate GTP. A Mg(2+)-binding site is contributed by E71. Residue E254 is part of the active site.

This sequence belongs to the tubulin family. In terms of assembly, dimer of alpha and beta chains. A typical microtubule is a hollow water-filled tube with an outer diameter of 25 nm and an inner diameter of 15 nM. Alpha-beta heterodimers associate head-to-tail to form protofilaments running lengthwise along the microtubule wall with the beta-tubulin subunit facing the microtubule plus end conferring a structural polarity. Microtubules usually have 13 protofilaments but different protofilament numbers can be found in some organisms and specialized cells. Requires Mg(2+) as cofactor. Post-translationally, acetylation of alpha chains at Lys-40 stabilizes microtubules and affects affinity and processivity of microtubule motors. This modification has a role in multiple cellular functions, ranging from cell motility, cell cycle progression or cell differentiation to intracellular trafficking and signaling.

Its subcellular location is the cytoplasm. The protein localises to the cytoskeleton. It is found in the spindle. The protein resides in the nucleus. The catalysed reaction is GTP + H2O = GDP + phosphate + H(+). In terms of biological role, tubulin is the major constituent of microtubules, a cylinder consisting of laterally associated linear protofilaments composed of alpha- and beta-tubulin heterodimers. Microtubules grow by the addition of GTP-tubulin dimers to the microtubule end, where a stabilizing cap forms. Below the cap, tubulin dimers are in GDP-bound state, owing to GTPase activity of alpha-tubulin. The protein is Tubulin alpha-2B chain (ALTBE) of Physarum polycephalum (Slime mold).